Consider the following 701-residue polypeptide: Sodium/hydrogen exchanger 6 (701 aa).

Transmembrane regions (helical) follow at residues 71–91 (SANL…IWLF) and 103–123 (GLAM…IHVP). An N-linked (GlcNAc...) asparagine glycan is attached at Asn-128. The next 8 helical transmembrane spans lie at 176 to 196 (VTFD…FYAG), 211 to 231 (ILAY…SIMY), 252 to 272 (CLLF…AIFH), 278 to 298 (VELY…AIVL), 324 to 344 (IGIF…TGVV), 372 to 392 (TFLL…FCGI), 414 to 434 (FELL…LTLF), and 436 to 456 (FQNH…IFLG). Lys-475 participates in a covalent cross-link: Glycyl lysine isopeptide (Lys-Gly) (interchain with G-Cter in ubiquitin). 2 helical membrane-spanning segments follow: residues 479-499 (NFQH…ALAI) and 515-535 (LLIV…MLSC).

The protein belongs to the monovalent cation:proton antiporter 1 (CPA1) transporter (TC 2.A.36) family. In terms of assembly, homodimer. Interacts with RACK1; regulates the distribution of SLC9A6 between endosomes and the plasma membrane. Post-translationally, ubiquitinated (in vitro). In terms of processing, glycosylated. In terms of tissue distribution, ubiquitous. High expression in brain, skeletal muscle, and heart, but is also detected at lower levels in most other tissues.

Its subcellular location is the endosome membrane. It localises to the recycling endosome membrane. The protein resides in the early endosome membrane. It is found in the late endosome membrane. The protein localises to the cell membrane. The catalysed reaction is Na(+)(in) + H(+)(out) = Na(+)(out) + H(+)(in). It carries out the reaction K(+)(in) + H(+)(out) = K(+)(out) + H(+)(in). Functionally, endosomal Na(+), K(+)/H(+) antiporter. Mediates the electroneutral exchange of endosomal luminal H(+) for a cytosolic Na(+) or K(+). By facilitating proton efflux, SLC9A6 counteracts the acidity generated by vacuolar (V)-ATPase, thereby limiting luminal acidification. Responsible for alkalizing and maintaining the endosomal pH, and consequently in, e.g., endosome maturation and trafficking of recycling endosomal cargo. Plays a critical role during neurodevelopment by regulating synaptic development and plasticity. Implicated in the maintenance of cell polarity in a manner that is dependent on its ability to modulate intravesicular pH. Regulates intracelular pH in some specialized cells, osteoclasts and stereocilia where this transporter localizes to the plasma membrane. This chain is Sodium/hydrogen exchanger 6, found in Homo sapiens (Human).